The following is a 437-amino-acid chain: Sperm-associated antigen 4 protein (437 aa).

A compositionally biased stretch (low complexity) spans 1 to 12 (MRRSSRPGSASS). The disordered stretch occupies residues 1-88 (MRRSSRPGSA…KPAPRSHNWQ (88 aa)). Composition is skewed to polar residues over residues 19 to 31 (NFFSENSSMSITS) and 72 to 88 (WAGSSQQKPAPRSHNWQ). A run of 2 helical transmembrane segments spans residues 135-155 (FLSLLFQGLSVLLSLAGDVLV) and 166-186 (FLFTAVSLLSLFLSAFWLGLL). Residues 197-244 (KEMLTLSEYHERVRSQGQQLQQLQAELDKLHKEVSTVRAANSERVAKL) are a coiled coil. Residues 265–425 (GASIDLQKTS…YRVRAHGVRT (161 aa)) enclose the SUN domain.

As to quaternary structure, homodimer. Interacts with ODF1. May associate with microtubules. Interacts with SUN3 and SYNE1; suggesting the formation of a spermatogenesis-specific LINC complex; a SUN domain-based heterotrimer with SUN3 may associate with SYNE1. Interacts with SEPT12 and LMNB1; during spermatogenesis. As to expression, predominantly epressed in testis. Expressed in ejaculated spermatozoa (at protein level).

It localises to the membrane. It is found in the cytoplasm. The protein localises to the cytoskeleton. The protein resides in the flagellum axoneme. Its subcellular location is the nucleus envelope. It localises to the nucleus inner membrane. Its function is as follows. Involved in spermatogenesis. Required for sperm head formation but not required to establish and maintain general polarity of the sperm head. Required for anchoring and organization of the manchette. Required for targeting of SUN3 and probably SYNE1 through a probable SUN1:SYNE3 LINC complex to the nuclear envelope and involved in accurate posterior sperm head localization of the complex. May anchor SUN3 the nuclear envelope. Involved in maintenance of the nuclear envelope integrity. May assist the organization and assembly of outer dense fibers (ODFs), a specific structure of the sperm tail. The protein is Sperm-associated antigen 4 protein (SPAG4) of Homo sapiens (Human).